Reading from the N-terminus, the 93-residue chain is Co-chaperonin GroES (93 aa).

The protein belongs to the GroES chaperonin family. As to quaternary structure, heptamer of 7 subunits arranged in a ring. Interacts with the chaperonin GroEL.

It is found in the cytoplasm. Its function is as follows. Together with the chaperonin GroEL, plays an essential role in assisting protein folding. The GroEL-GroES system forms a nano-cage that allows encapsulation of the non-native substrate proteins and provides a physical environment optimized to promote and accelerate protein folding. GroES binds to the apical surface of the GroEL ring, thereby capping the opening of the GroEL channel. The protein is Co-chaperonin GroES of Streptococcus gordonii.